Here is a 492-residue protein sequence, read N- to C-terminus: NADH-quinone oxidoreductase subunit N (492 aa).

The next 14 membrane-spanning stretches (helical) occupy residues 12–32 (LLPY…MIAI), 44–64 (ISVV…AGII), 76–96 (LFVI…CALA), 115–135 (LYLL…AQHL), 138–158 (FFMS…YTYM), 169–189 (YLVL…FIYA), 212–232 (LILG…AAPF), 244–264 (PAPI…ALAV), 272–292 (LLAL…SILL), 306–326 (LLGY…VSIG), 334–354 (SMYM…VTLM), 381–401 (TAVM…AGFI), 416–438 (WFLA…RVLL), and 463–483 (IMVI…NSMI).

It belongs to the complex I subunit 2 family. NDH-1 is composed of 14 different subunits. Subunits NuoA, H, J, K, L, M, N constitute the membrane sector of the complex.

It is found in the cell inner membrane. The enzyme catalyses a quinone + NADH + 5 H(+)(in) = a quinol + NAD(+) + 4 H(+)(out). Functionally, NDH-1 shuttles electrons from NADH, via FMN and iron-sulfur (Fe-S) centers, to quinones in the respiratory chain. The immediate electron acceptor for the enzyme in this species is believed to be ubiquinone. Couples the redox reaction to proton translocation (for every two electrons transferred, four hydrogen ions are translocated across the cytoplasmic membrane), and thus conserves the redox energy in a proton gradient. The polypeptide is NADH-quinone oxidoreductase subunit N (Psychrobacter arcticus (strain DSM 17307 / VKM B-2377 / 273-4)).